We begin with the raw amino-acid sequence, 248 residues long: Ribonuclease 3 (248 aa).

The 131-residue stretch at 6 to 136 folds into the RNase III domain; it reads LAYLQTLIGS…LIGAIYLDKG (131 aa). E49 lines the Mg(2+) pocket. D53 is an active-site residue. Positions 122 and 125 each coordinate Mg(2+). E125 is a catalytic residue. Residues 163–231 form the DRBM domain; the sequence is NYKSCLIEYS…AKEAMERIIA (69 aa).

Belongs to the ribonuclease III family. In terms of assembly, homodimer. Mg(2+) serves as cofactor.

The protein resides in the cytoplasm. It carries out the reaction Endonucleolytic cleavage to 5'-phosphomonoester.. Digests double-stranded RNA. Involved in the processing of primary rRNA transcript to yield the immediate precursors to the large and small rRNAs (23S and 16S). Processes some mRNAs, and tRNAs when they are encoded in the rRNA operon. Processes pre-crRNA and tracrRNA of type II CRISPR loci if present in the organism. This chain is Ribonuclease 3, found in Chlorobium chlorochromatii (strain CaD3).